We begin with the raw amino-acid sequence, 619 residues long: CLPTM1-like membrane protein cnrB (619 aa).

The tract at residues 1–21 (MNNQGGAVAANGQRPQAQQQQ) is disordered. The segment covering 9 to 21 (AANGQRPQAQQQQ) has biased composition (low complexity). The next 6 membrane-spanning stretches (helical) occupy residues 26–46 (IMGI…ASFA), 324–344 (WILG…FLAF), 360–380 (LSVK…LYLL), 384–404 (TSYM…WKLG), 445–465 (YLSW…LYYH), and 474–496 (VVSS…QLFI). The tract at residues 566-619 (SEEAEEVQQQDKKEIKEKVEEREEEKQEEEEEEKEKEEESTSSSKVTKRKTKKV) is disordered. The segment covering 574 to 590 (QQDKKEIKEKVEEREEE) has biased composition (basic and acidic residues). Positions 591 to 605 (KQEEEEEEKEKEEES) are enriched in acidic residues.

This sequence belongs to the CLPTM1 family.

Its subcellular location is the membrane. The chain is CLPTM1-like membrane protein cnrB (cnrB) from Dictyostelium discoideum (Social amoeba).